The following is an 80-amino-acid chain: Protein FAM229B (80 aa).

Positions methionine 1 to arginine 45 are disordered. Residues glutamate 15–serine 32 are compositionally biased toward low complexity. Positions cysteine 33–arginine 42 are enriched in polar residues.

The protein belongs to the FAM229 family.

The sequence is that of Protein FAM229B (Fam229b) from Mus musculus (Mouse).